Here is a 600-residue protein sequence, read N- to C-terminus: Albumin (600 aa).

The N-terminal stretch at 1 to 10 (LLFLFSSAYS) is a signal peptide. A propeptide spanning residues 11–16 (RGVFRR) is cleaved from the precursor. 3 consecutive Albumin domains span residues 11 to 202 (RGVF…DELR), 203 to 395 (DEGK…EFQP), and 396 to 593 (LVEE…KFVA). Residue His19 participates in Cu cation binding. Ser21 bears the Phosphoserine mark. Ca(2+) contacts are provided by Glu22 and Asp29. An intrachain disulfide couples Cys69 to Cys78. Residues Ser74 and Ser81 each carry the phosphoserine modification. His83 serves as a coordination point for Zn(2+). Disulfide bonds link Cys91-Cys107, Cys106-Cys117, Cys140-Cys185, Cys184-Cys193, Cys216-Cys262, and Cys261-Cys269. At Thr99 the chain carries Phosphothreonine. Lys221 is modified (N6-succinyllysine). Lys256 contacts (4Z,15Z)-bilirubin IXalpha. Glu260 contributes to the Ca(2+) binding site. His263 and Asp265 together coordinate Zn(2+). Positions 265, 268, 271, and 275 each coordinate Ca(2+). 8 disulfide bridges follow: Cys281–Cys295, Cys294–Cys305, Cys332–Cys377, Cys376–Cys385, Cys408–Cys454, Cys453–Cys464, Cys477–Cys493, and Cys492–Cys503. Position 289 is a phosphoserine (Ser289). At Ser435 the chain carries Phosphoserine. Phosphothreonine occurs at positions 436 and 438. The residue at position 452 (Lys452) is an N6-succinyllysine. Ser505 carries the phosphoserine modification. 2 disulfides stabilise this stretch: Cys530–Cys575 and Cys574–Cys583. An N6-succinyllysine modification is found at Lys535. The residue at position 550 (Lys550) is an N6-methyllysine. The residue at position 580 (Lys580) is an N6-succinyllysine.

It belongs to the ALB/AFP/VDB family. As to quaternary structure, interacts with FCGRT; this interaction regulates ALB homeostasis. Interacts with TASOR. In plasma, occurs in a covalently-linked complex with chromophore-bound alpha-1-microglobulin; this interaction does not prevent fatty acid binding to ALB. In terms of processing, phosphorylated by FAM20C in the extracellular medium. In terms of tissue distribution, plasma.

The protein resides in the secreted. Its function is as follows. Binds water, Ca(2+), Na(+), K(+), fatty acids, hormones, bilirubin and drugs. Its main function is the regulation of the colloidal osmotic pressure of blood. Major zinc transporter in plasma, typically binds about 80% of all plasma zinc. Major calcium and magnesium transporter in plasma, binds approximately 45% of circulating calcium and magnesium in plasma. Potentially has more than two calcium-binding sites and might additionally bind calcium in a non-specific manner. The shared binding site between zinc and calcium at residue Asp-265 suggests a crosstalk between zinc and calcium transport in the blood. The rank order of affinity is zinc &gt; calcium &gt; magnesium. Binds to the bacterial siderophore enterobactin and inhibits enterobactin-mediated iron uptake of E.coli from ferric transferrin, and may thereby limit the utilization of iron and growth of enteric bacteria such as E.coli. Does not prevent iron uptake by the bacterial siderophore aerobactin. The chain is Albumin (ALB) from Macaca mulatta (Rhesus macaque).